We begin with the raw amino-acid sequence, 385 residues long: 3-hydroxyisobutyryl-CoA hydrolase, mitochondrial (385 aa).

Residues glutamate 120, glycine 145, glutamate 168, and aspartate 176 each contribute to the substrate site.

Belongs to the enoyl-CoA hydratase/isomerase family.

The protein resides in the mitochondrion. The enzyme catalyses 3-hydroxy-2-methylpropanoyl-CoA + H2O = 3-hydroxy-2-methylpropanoate + CoA + H(+). It functions in the pathway amino-acid degradation; L-valine degradation. Functionally, hydrolyzes 3-hydroxyisobutyryl-CoA (HIBYL-CoA), a saline catabolite. Has high activity toward isobutyryl-CoA. Could be an isobutyryl-CoA dehydrogenase that functions in valine catabolism. Also hydrolyzes 3-hydroxypropanoyl-CoA. In Gallus gallus (Chicken), this protein is 3-hydroxyisobutyryl-CoA hydrolase, mitochondrial (HIBCH).